The following is a 434-amino-acid chain: Enolase 2 (434 aa).

Gln-171 is a binding site for (2R)-2-phosphoglycerate. The Proton donor role is filled by Glu-213. Mg(2+) is bound by residues Asp-250, Glu-293, and Asp-320. The (2R)-2-phosphoglycerate site is built by Lys-345, Arg-374, Ser-375, and Lys-396. Lys-345 serves as the catalytic Proton acceptor.

The protein belongs to the enolase family. The cofactor is Mg(2+).

The protein localises to the cytoplasm. It is found in the secreted. It localises to the cell surface. The catalysed reaction is (2R)-2-phosphoglycerate = phosphoenolpyruvate + H2O. Its pathway is carbohydrate degradation; glycolysis; pyruvate from D-glyceraldehyde 3-phosphate: step 4/5. In terms of biological role, catalyzes the reversible conversion of 2-phosphoglycerate (2-PG) into phosphoenolpyruvate (PEP). It is essential for the degradation of carbohydrates via glycolysis. The polypeptide is Enolase 2 (Streptomyces coelicolor (strain ATCC BAA-471 / A3(2) / M145)).